The following is a 353-amino-acid chain: MDIAALLSGGVDSSVVVHLLCEQGYKPTLFYIKIGMDGAEYMDCSAEEDIELSTAIARRYGLALEVVDLHREYWDNVAAYAIEKIRKGQTPNPDVMCNKLIKFGCFEQQVGKDFDLTATGHYATTLQLGGKTWLGTAKDPIKDQTDFLAQIDYLQVSKLLFPIGGLMKHEVREIALRAGLPSARRKDSQGICFLGKINYNDFVRRFLGEKEGAVIEFETGKKIGTHRGYWFHTIGQRKGLGLGGGPWFVVKKDIQDNIIYVSHGYDAEQQYGYEFRMKDFNFITDNPWEGSTGEEEVTFKIRHTPEFIKGRLLHDEEGYRIISSEKLQGIAPGQFGVIYDAESRVCFGSGEIG.

6 to 13 serves as a coordination point for ATP; sequence LLSGGVDS. Positions 92-94 are interaction with target base in tRNA; the sequence is NPD. Cys-97 (nucleophile) is an active-site residue. Cys-97 and Cys-192 are oxidised to a cystine. An ATP-binding site is contributed by Gly-120. Positions 142-144 are interaction with tRNA; it reads KDQ. Residue Cys-192 is the Cysteine persulfide intermediate of the active site.

It belongs to the MnmA/TRMU family.

Its subcellular location is the cytoplasm. The enzyme catalyses S-sulfanyl-L-cysteinyl-[protein] + uridine(34) in tRNA + AH2 + ATP = 2-thiouridine(34) in tRNA + L-cysteinyl-[protein] + A + AMP + diphosphate + H(+). Catalyzes the 2-thiolation of uridine at the wobble position (U34) of tRNA, leading to the formation of s(2)U34. The protein is tRNA-specific 2-thiouridylase MnmA 2 of Bacteroides fragilis (strain YCH46).